Here is a 126-residue protein sequence, read N- to C-terminus: Protein ApaG (126 aa).

The ApaG domain occupies 2-126; sequence NQLAASVSVD…FRLSIPGLLH (125 aa).

This is Protein ApaG from Shewanella pealeana (strain ATCC 700345 / ANG-SQ1).